The sequence spans 249 residues: 5'-nucleotidase SurE (249 aa).

A divalent metal cation contacts are provided by D8, D9, S39, and N91.

This sequence belongs to the SurE nucleotidase family. A divalent metal cation is required as a cofactor.

Its subcellular location is the cytoplasm. The enzyme catalyses a ribonucleoside 5'-phosphate + H2O = a ribonucleoside + phosphate. Functionally, nucleotidase that shows phosphatase activity on nucleoside 5'-monophosphates. This Pseudomonas putida (strain W619) protein is 5'-nucleotidase SurE.